Here is a 385-residue protein sequence, read N- to C-terminus: Aspartate/prephenate aminotransferase (385 aa).

L-aspartate is bound by residues glycine 39, tryptophan 125, and asparagine 175. At lysine 234 the chain carries N6-(pyridoxal phosphate)lysine. Residue arginine 361 coordinates L-aspartate.

This sequence belongs to the class-I pyridoxal-phosphate-dependent aminotransferase family. As to quaternary structure, homodimer. Requires pyridoxal 5'-phosphate as cofactor.

The protein localises to the cytoplasm. It carries out the reaction L-aspartate + 2-oxoglutarate = oxaloacetate + L-glutamate. It catalyses the reaction L-arogenate + oxaloacetate = prephenate + L-aspartate. Its function is as follows. Catalyzes the reversible conversion of aspartate and 2-oxoglutarate to glutamate and oxaloacetate. Can also transaminate prephenate in the presence of aspartate. This chain is Aspartate/prephenate aminotransferase (aspC), found in Thermus thermophilus (strain ATCC 27634 / DSM 579 / HB8).